A 176-amino-acid chain; its full sequence is NAD(P)H-quinone oxidoreductase subunit 6, chloroplastic (176 aa).

The next 5 helical transmembrane spans lie at 10 to 30, 33 to 53, 60 to 80, 95 to 115, and 152 to 172; these read ILVLFLGFVLLLGGLGVVLLT, IYSAFSLGLVLVCISLFYFLL, VAQLLIYVGAINVLIIFAVMF, IGDGFTSLVCITIVFSLMTTI, and FYLPFELISIILLVSLIGAIT.

This sequence belongs to the complex I subunit 6 family. In terms of assembly, NDH is composed of at least 16 different subunits, 5 of which are encoded in the nucleus.

The protein resides in the plastid. It is found in the chloroplast thylakoid membrane. The enzyme catalyses a plastoquinone + NADH + (n+1) H(+)(in) = a plastoquinol + NAD(+) + n H(+)(out). It catalyses the reaction a plastoquinone + NADPH + (n+1) H(+)(in) = a plastoquinol + NADP(+) + n H(+)(out). Functionally, NDH shuttles electrons from NAD(P)H:plastoquinone, via FMN and iron-sulfur (Fe-S) centers, to quinones in the photosynthetic chain and possibly in a chloroplast respiratory chain. The immediate electron acceptor for the enzyme in this species is believed to be plastoquinone. Couples the redox reaction to proton translocation, and thus conserves the redox energy in a proton gradient. This chain is NAD(P)H-quinone oxidoreductase subunit 6, chloroplastic (ndhG), found in Brachypodium distachyon (Purple false brome).